Consider the following 106-residue polypeptide: Toxin-like structure LSTX-D9 (106 aa).

Positions 1–20 (MMKVLVVVALLLTLIIYSSS) are cleaved as a signal peptide. The propeptide occupies 21–41 (DGIDDLEADELVSLMAHEQTR). 4 disulfide bridges follow: C45–C60, C52–C69, C59–C85, and C71–C83.

It belongs to the neurotoxin 19 (CSTX) family. 02 (D7) subfamily. Expressed by the venom gland.

The protein localises to the secreted. The polypeptide is Toxin-like structure LSTX-D9 (Lycosa singoriensis (Wolf spider)).